A 166-amino-acid chain; its full sequence is Interleukin-3 (166 aa).

The signal sequence occupies residues 1-27 (MVLASSTTSILCMLLPLLMLFHQGLQI). Cystine bridges form between Cys-43-Cys-106 and Cys-105-Cys-166. N-linked (GlcNAc...) asparagine glycans are attached at residues Asn-60 and Asn-70. The segment at 145–166 (SVSRPPQPTSSSDNFRPMTVEC) is disordered.

It belongs to the IL-3 family. As to quaternary structure, monomer. Activated T-cells, mast cells, natural killer cells.

It is found in the secreted. Cytokine secreted predominantly by activated T-lymphocytes as well as mast cells and osteoblastic cells that controls the production and differentiation of hematopoietic progenitor cells into lineage-restricted cells. Also stimulates mature basophils, eosinophils, and monocytes to become functionally activated. In addition, plays an important role in neural cell proliferation and survival. Participates as well in bone homeostasis and inhibits osteoclast differentiation by preventing NF-kappa-B nuclear translocation and activation. Mechanistically, exerts its biological effects through a receptor composed of IL3RA subunit and a signal transducing subunit IL3RB. Receptor stimulation results in the rapid activation of JAK2 kinase activity leading to STAT5-mediated transcriptional program. Alternatively, contributes to cell survival under oxidative stress in non-hematopoietic systems by activating pathways mediated by PI3K/AKT and ERK. The chain is Interleukin-3 (Il3) from Rattus norvegicus (Rat).